The primary structure comprises 431 residues: NADH-quinone oxidoreductase subunit D 2 (431 aa).

Residues 1–37 (MSEAKGVGGIDPRATPGSAGAGERPPMGTLSPRAGEG) are disordered.

Belongs to the complex I 49 kDa subunit family. As to quaternary structure, NDH-1 is composed of 14 different subunits. Subunits NuoB, C, D, E, F, and G constitute the peripheral sector of the complex.

Its subcellular location is the cell inner membrane. The enzyme catalyses a quinone + NADH + 5 H(+)(in) = a quinol + NAD(+) + 4 H(+)(out). In terms of biological role, NDH-1 shuttles electrons from NADH, via FMN and iron-sulfur (Fe-S) centers, to quinones in the respiratory chain. The immediate electron acceptor for the enzyme in this species is believed to be ubiquinone. Couples the redox reaction to proton translocation (for every two electrons transferred, four hydrogen ions are translocated across the cytoplasmic membrane), and thus conserves the redox energy in a proton gradient. The sequence is that of NADH-quinone oxidoreductase subunit D 2 from Anaeromyxobacter sp. (strain K).